The primary structure comprises 674 residues: Sodium/hydrogen exchanger 1 (674 aa).

Positions 1-24 are cleaved as a signal peptide; sequence MKLNKSYILIVVLLLSLFYSSVSS. The interval 31-65 is disordered; the sequence is KSNNHYNSDNSNNDNKNININNNNDGDGDDDDDNN. The span at 37–55 shows a compositional bias: low complexity; sequence NSDNSNNDNKNININNNND. The next 12 helical transmembrane spans lie at 120–140, 144–164, 175–195, 213–233, 275–297, 314–334, 336–356, 359–379, 401–421, 432–452, 460–480, and 499–519; these read TIIFIIMLILTGSVLIVYFII, IPFVPESVAVVTYGIILGIVF, VVSFEPENFFLFILPTIIFET, MFAVFGTIITFLVVGFGIYIV, LYILVLGESILNDATSMMLYSVV, VVAIGSVILGVVMALLLSLIL, WINIGKFPALETIFMVMFSYM, VLAGALDISGVLAVFFFGITL, TAAFISETFLFLYFGLSLTAH, WSILFTCLARAISVFPMCFLL, IPWVIQVAIWFAGLRGAFAFS, and NTLLVVVFTIFVFGMGTYPLL. Positions 591-674 are disordered; that stretch reads HELDSNPLRF…NKNNDTLPLI (84 aa). A compositionally biased stretch (acidic residues) spans 601-618; that stretch reads DDDEEDDDDEDLDFDSDL. Residues 627-657 show a composition bias toward low complexity; sequence DSIHQSDNNNNDNGNNNNNNNNIIINNNSQH. Residues 662-674 show a composition bias toward polar residues; sequence GSNNKNNDTLPLI.

It belongs to the monovalent cation:proton antiporter 1 (CPA1) transporter (TC 2.A.36) family.

The protein localises to the membrane. Its activity is regulated as follows. LY294002, an inhibitor of the catalytic subunit of PI3-kinase, blocks NHE1-dependent (but not NHE1-independent) increase in intracellular pH in response to cAMP. Functionally, regulation of intracellular pH homeostasis in response to cAMP, which is essential for chemotaxis. Necessary for F-actin localization and the kinetics of actin polymerization during chemotaxis and cell polarity but not for directional sensing. In Dictyostelium discoideum (Social amoeba), this protein is Sodium/hydrogen exchanger 1 (nhe1).